The chain runs to 185 residues: dCTP deaminase (185 aa).

Residues 107-112 (KSTYAR), 131-133 (TLE), glutamine 152, tyrosine 166, and glutamine 176 contribute to the dCTP site. The Proton donor/acceptor role is filled by glutamate 133.

It belongs to the dCTP deaminase family. As to quaternary structure, homotrimer.

The catalysed reaction is dCTP + H2O + H(+) = dUTP + NH4(+). It participates in pyrimidine metabolism; dUMP biosynthesis; dUMP from dCTP (dUTP route): step 1/2. In terms of biological role, catalyzes the deamination of dCTP to dUTP. This is dCTP deaminase from Wolbachia pipientis wMel.